Reading from the N-terminus, the 309-residue chain is Malate dehydrogenase (309 aa).

Residues 9–14 (GAGFVG) and aspartate 33 each bind NAD(+). 2 residues coordinate substrate: arginine 82 and arginine 88. NAD(+)-binding positions include asparagine 95 and 118-120 (VNN). Substrate-binding residues include asparagine 120 and arginine 151. The Proton acceptor role is filled by histidine 175.

The protein belongs to the LDH/MDH superfamily. MDH type 3 family.

The catalysed reaction is (S)-malate + NAD(+) = oxaloacetate + NADH + H(+). Functionally, catalyzes the reversible oxidation of malate to oxaloacetate. The chain is Malate dehydrogenase from Roseiflexus castenholzii (strain DSM 13941 / HLO8).